The primary structure comprises 274 residues: Siroheme biosynthesis protein MET8 (274 aa).

Residues 23–24 (EV), 43–45 (SPD), and phenylalanine 93 each bind NAD(+). The active-site Proton acceptor is aspartate 141.

The protein belongs to the precorrin-2 dehydrogenase / sirohydrochlorin ferrochelatase family. MET8 subfamily. As to quaternary structure, homodimer.

It carries out the reaction precorrin-2 + NAD(+) = sirohydrochlorin + NADH + 2 H(+). The enzyme catalyses siroheme + 2 H(+) = sirohydrochlorin + Fe(2+). The protein operates within porphyrin-containing compound metabolism; siroheme biosynthesis; siroheme from sirohydrochlorin: step 1/1. It functions in the pathway porphyrin-containing compound metabolism; siroheme biosynthesis; sirohydrochlorin from precorrin-2: step 1/1. Catalyzes the conversion of precorrin-2 into siroheme. This reaction consist of the NAD-dependent oxidation of precorrin-2 into sirohydrochlorin and its subsequent ferrochelation into siroheme. The polypeptide is Siroheme biosynthesis protein MET8 (Saccharomyces cerevisiae (strain ATCC 204508 / S288c) (Baker's yeast)).